Reading from the N-terminus, the 84-residue chain is ATP synthase subunit c (84 aa).

Transmembrane regions (helical) follow at residues 8 to 28 and 56 to 76; these read VAGM…GGGI and IIGS…AILL.

The protein belongs to the ATPase C chain family. In terms of assembly, F-type ATPases have 2 components, F(1) - the catalytic core - and F(0) - the membrane proton channel. F(1) has five subunits: alpha(3), beta(3), gamma(1), delta(1), epsilon(1). F(0) has three main subunits: a(1), b(2) and c(10-14). The alpha and beta chains form an alternating ring which encloses part of the gamma chain. F(1) is attached to F(0) by a central stalk formed by the gamma and epsilon chains, while a peripheral stalk is formed by the delta and b chains.

The protein resides in the cell membrane. Functionally, f(1)F(0) ATP synthase produces ATP from ADP in the presence of a proton or sodium gradient. F-type ATPases consist of two structural domains, F(1) containing the extramembraneous catalytic core and F(0) containing the membrane proton channel, linked together by a central stalk and a peripheral stalk. During catalysis, ATP synthesis in the catalytic domain of F(1) is coupled via a rotary mechanism of the central stalk subunits to proton translocation. Its function is as follows. Key component of the F(0) channel; it plays a direct role in translocation across the membrane. A homomeric c-ring of between 10-14 subunits forms the central stalk rotor element with the F(1) delta and epsilon subunits. This Clostridium novyi (strain NT) protein is ATP synthase subunit c.